We begin with the raw amino-acid sequence, 30 residues long: U10-ctenitoxin-Co1b (30 aa).

2 disulfides stabilise this stretch: Cys-2/Cys-17 and Cys-9/Cys-22.

As to expression, expressed by the venom gland.

It is found in the secreted. In terms of biological role, antagonist of L-type calcium channels (Cav1/CACNA1). The protein is U10-ctenitoxin-Co1b of Ctenus ornatus (Brazilian spider).